We begin with the raw amino-acid sequence, 425 residues long: Serine--tRNA ligase (425 aa).

Residue 233–235 (TAE) coordinates L-serine. 264–266 (RRE) contributes to the ATP binding site. Glu287 is an L-serine binding site. 351 to 354 (EISS) contacts ATP. Ser385 is a binding site for L-serine.

Belongs to the class-II aminoacyl-tRNA synthetase family. Type-1 seryl-tRNA synthetase subfamily. Homodimer. The tRNA molecule binds across the dimer.

It localises to the cytoplasm. The enzyme catalyses tRNA(Ser) + L-serine + ATP = L-seryl-tRNA(Ser) + AMP + diphosphate + H(+). It catalyses the reaction tRNA(Sec) + L-serine + ATP = L-seryl-tRNA(Sec) + AMP + diphosphate + H(+). It functions in the pathway aminoacyl-tRNA biosynthesis; selenocysteinyl-tRNA(Sec) biosynthesis; L-seryl-tRNA(Sec) from L-serine and tRNA(Sec): step 1/1. Catalyzes the attachment of serine to tRNA(Ser). Is also able to aminoacylate tRNA(Sec) with serine, to form the misacylated tRNA L-seryl-tRNA(Sec), which will be further converted into selenocysteinyl-tRNA(Sec). The polypeptide is Serine--tRNA ligase (Prochlorococcus marinus (strain MIT 9215)).